A 162-amino-acid chain; its full sequence is Caveolin-2 (162 aa).

Topologically, residues 1–86 are cytoplasmic; sequence MGLETEKADV…FEISKYVMYK (86 aa). Tyr19 carries the post-translational modification Phosphotyrosine; by SRC. 2 positions are modified to phosphoserine: Ser20 and Ser23. Tyr27 carries the phosphotyrosine; by SRC modification. A Phosphoserine modification is found at Ser36. The helical intramembrane region spans 87–107; sequence FLTVFLAIPLAFIAGILFATL. The Cytoplasmic portion of the chain corresponds to 108–162; it reads SCLHIWILMPFVKTCLMVLPSVQTIWKSVTDVIIAPLCTSVGRCFSSVSLQLSQD.

Belongs to the caveolin family. As to quaternary structure, monomer or homodimer. Interacts with CAV1; the interaction forms a stable heterooligomeric complex that is required for targeting to lipid rafts and for caveolae formation. Tyrosine phosphorylated forms do not form heterooligomers with the Tyr-19-phosphorylated form existing as a monomer or dimer, and the Tyr-27-form as a monomer only. Interacts (tyrosine phosphorylated form) with the SH2 domain-containing proteins, RASA1, NCK1 and SRC. Interacts (tyrosine phosphorylated form) with INSR, the interaction (Tyr-27-phosphorylated form) is increased on insulin stimulation. Interacts (Tyr-19 phosphorylated form) with MAPK1 (phosphorylated form); the interaction, promoted by insulin, leads to nuclear location and MAPK1 activation. Interacts with STAT3; the interaction is increased on insulin-induced tyrosine phosphorylation leading to STAT activation. Phosphorylated on serine and tyrosine residues. CAV1 promotes phosphorylation on Ser-23 which then targets the complex to the plasma membrane, lipid rafts and caveolae. Phosphorylation on Ser-36 appears to modulate mitosis in endothelial cells. Phosphorylation on both Tyr-19 and Tyr-27 is required for insulin-induced 'Ser-727' phosphorylation of STAT3 and its activation. Phosphorylation on Tyr-19 is required for insulin-induced phosphorylation of MAPK1 and DNA binding of STAT3. Tyrosine phosphorylation is induced by both EGF and insulin (By. similarity).

Its subcellular location is the nucleus. The protein localises to the cytoplasm. It localises to the golgi apparatus membrane. It is found in the cell membrane. The protein resides in the membrane. Its subcellular location is the caveola. Functionally, may act as a scaffolding protein within caveolar membranes. Interacts directly with G-protein alpha subunits and can functionally regulate their activity. Acts as an accessory protein in conjunction with CAV1 in targeting to lipid rafts and driving caveolae formation. The Ser-36 phosphorylated form has a role in modulating mitosis in endothelial cells. Positive regulator of cellular mitogenesis of the MAPK signaling pathway. Required for the insulin-stimulated nuclear translocation and activation of MAPK1 and STAT3, and the subsequent regulation of cell cycle progression. The chain is Caveolin-2 (CAV2) from Pan troglodytes (Chimpanzee).